Reading from the N-terminus, the 355-residue chain is Acidic fibroblast growth factor intracellular-binding protein B (355 aa).

As to quaternary structure, interacts with IER2.

It is found in the nucleus. It localises to the endomembrane system. Its function is as follows. Mediates with IER2 FGF-signaling in Kupffer's vesicle ciliogenesis and in the establishment of laterality in the embryo. May be involved in mitogenic function of FGF1. The chain is Acidic fibroblast growth factor intracellular-binding protein B from Danio rerio (Zebrafish).